A 311-amino-acid chain; its full sequence is Alpha/beta hydrolase domain-containing protein 17C (311 aa).

Positions 48–67 (EAPASTAQQPPREEGSGEPA) are disordered. Active-site charge relay system residues include Ser193, Asp258, and His287.

Belongs to the AB hydrolase superfamily. ABHD17 family. Palmitoylated on cysteine residues located in a cysteine cluster at the N-terminus which promotes membrane localization.

It is found in the recycling endosome membrane. The protein localises to the cell projection. Its subcellular location is the dendritic spine. The protein resides in the postsynaptic density membrane. It catalyses the reaction S-hexadecanoyl-L-cysteinyl-[protein] + H2O = L-cysteinyl-[protein] + hexadecanoate + H(+). Functionally, hydrolyzes fatty acids from S-acylated cysteine residues in proteins. Has depalmitoylating activity towards NRAS. The protein is Alpha/beta hydrolase domain-containing protein 17C of Xenopus laevis (African clawed frog).